The following is a 344-amino-acid chain: Dihydroorotate dehydrogenase (quinone) (344 aa).

FMN is bound by residues 61-65 (AGLDK) and T85. Position 65 (K65) interacts with substrate. Position 110–114 (110–114 (NRMGF)) interacts with substrate. Residues N138 and N171 each coordinate FMN. N171 provides a ligand contact to substrate. S174 (nucleophile) is an active-site residue. A substrate-binding site is contributed by N176. Residues K216 and T244 each coordinate FMN. 245–246 (NT) is a substrate binding site. Residues G267, G296, and 317 to 318 (YS) contribute to the FMN site.

It belongs to the dihydroorotate dehydrogenase family. Type 2 subfamily. As to quaternary structure, monomer. It depends on FMN as a cofactor.

The protein localises to the cell membrane. The enzyme catalyses (S)-dihydroorotate + a quinone = orotate + a quinol. It participates in pyrimidine metabolism; UMP biosynthesis via de novo pathway; orotate from (S)-dihydroorotate (quinone route): step 1/1. Its function is as follows. Catalyzes the conversion of dihydroorotate to orotate with quinone as electron acceptor. The protein is Dihydroorotate dehydrogenase (quinone) of Psychrobacter arcticus (strain DSM 17307 / VKM B-2377 / 273-4).